The following is a 605-amino-acid chain: Probable potassium transport system protein Kup (605 aa).

The next 12 helical transmembrane spans lie at 17–37 (GLVFGDIGTSPIYTLTVIFAL), 45–65 (VFGILSMVVWTLIILVTVEYA), 96–116 (IAFVGFLSFVGVSLLLGDGVI), 140–160 (LGTLILIAALIAVVLFIFQFK), 165–185 (VAAAFGPLMVLWFGALTVSGL), 211–231 (GISAFFVLSEVILCATGGEAL), 246–266 (AWYFVFVALIINYLGQGAFAL), 286–306 (LYIPFLILTILATVIASQALI), 338–358 (IYIGSVNWFLMLLVIFIMLIF), 367–387 (AYGLAVTGTMTITGIMMTIIF), 394–414 (WKVPVAVAVTIVDVVFLISNL), and 417–437 (LPHGGYWSIILASVPFATILI).

Belongs to the HAK/KUP transporter (TC 2.A.72) family.

The protein localises to the cell inner membrane. The catalysed reaction is K(+)(in) + H(+)(in) = K(+)(out) + H(+)(out). Its function is as follows. Transport of potassium into the cell. Likely operates as a K(+):H(+) symporter. The polypeptide is Probable potassium transport system protein Kup (Geotalea uraniireducens (strain Rf4) (Geobacter uraniireducens)).